The sequence spans 148 residues: UPF0260 protein KPN78578_22800 (148 aa).

This sequence belongs to the UPF0260 family.

This is UPF0260 protein KPN78578_22800 from Klebsiella pneumoniae subsp. pneumoniae (strain ATCC 700721 / MGH 78578).